Reading from the N-terminus, the 363-residue chain is Spermidine/putrescine import ATP-binding protein PotA 2 (363 aa).

The region spanning 6-236 (LEIRNVTRRF…PRSRFVADFI (231 aa)) is the ABC transporter domain. 38–45 (GPSGCGKT) contributes to the ATP binding site.

The protein belongs to the ABC transporter superfamily. Spermidine/putrescine importer (TC 3.A.1.11.1) family. As to quaternary structure, the complex is composed of two ATP-binding proteins (PotA), two transmembrane proteins (PotB and PotC) and a solute-binding protein (PotD).

It is found in the cell inner membrane. The catalysed reaction is ATP + H2O + polyamine-[polyamine-binding protein]Side 1 = ADP + phosphate + polyamineSide 2 + [polyamine-binding protein]Side 1.. In terms of biological role, part of the ABC transporter complex PotABCD involved in spermidine/putrescine import. Responsible for energy coupling to the transport system. The protein is Spermidine/putrescine import ATP-binding protein PotA 2 of Pseudomonas aeruginosa (strain ATCC 15692 / DSM 22644 / CIP 104116 / JCM 14847 / LMG 12228 / 1C / PRS 101 / PAO1).